The following is a 111-amino-acid chain: Large ribosomal subunit protein uL22 (111 aa).

Belongs to the universal ribosomal protein uL22 family. As to quaternary structure, part of the 50S ribosomal subunit.

Its function is as follows. This protein binds specifically to 23S rRNA; its binding is stimulated by other ribosomal proteins, e.g. L4, L17, and L20. It is important during the early stages of 50S assembly. It makes multiple contacts with different domains of the 23S rRNA in the assembled 50S subunit and ribosome. In terms of biological role, the globular domain of the protein is located near the polypeptide exit tunnel on the outside of the subunit, while an extended beta-hairpin is found that lines the wall of the exit tunnel in the center of the 70S ribosome. The protein is Large ribosomal subunit protein uL22 of Wigglesworthia glossinidia brevipalpis.